Consider the following 472-residue polypeptide: MVSATRWETAIEVTPWIAAIAEQVPLFGTDGIRGRVGEHLTAPLAQQVGFWTGQVLRQAGGDRGPVVVGQDSRNSSNMLAMALSSGLAAAGVEVLHLGLCPTPGVAYLTHHSEAIGGVMISASHNPPGDNGIKVFGADGSKLDRQLQAAIEAGLRGQQTSLPATTWGQHYYQPQLADHYQAAIAQSLGQRANLQGLKIVLDLAWGAAALLAPRLFRELGAEVIALHDLPDGNQINVNCGSTHLARLQAAVLEQGADMGFAFDGDADRVLAVDGRGRSVDGDHILFLWGRELEQQQQLPGQAIVTTVMANLGFERAWQAVGGEFVRTAVGDQYVQAEMQARGAMLGGEQSGHILCRHYALTGDGTLTAAHVAALVQASGVSLADLVDQSFRPYPQLLRNVRVEDRDRRCNWQNCAALTQAIAAAETDMGDRGRVLVRASGTEPLLRIMVEAEEAQQVEHWTTHLVQVAESHLL.

Residue Ser-123 is the Phosphoserine intermediate of the active site. The Mg(2+) site is built by Ser-123, Asp-262, Asp-264, and Asp-266. Ser-123 carries the phosphoserine modification.

It belongs to the phosphohexose mutase family. It depends on Mg(2+) as a cofactor. Post-translationally, activated by phosphorylation.

It catalyses the reaction alpha-D-glucosamine 1-phosphate = D-glucosamine 6-phosphate. In terms of biological role, catalyzes the conversion of glucosamine-6-phosphate to glucosamine-1-phosphate. This is Phosphoglucosamine mutase from Synechococcus elongatus (strain ATCC 33912 / PCC 7942 / FACHB-805) (Anacystis nidulans R2).